The chain runs to 180 residues: Translation initiation factor IF-3 (180 aa).

The protein belongs to the IF-3 family. In terms of assembly, monomer.

The protein resides in the cytoplasm. IF-3 binds to the 30S ribosomal subunit and shifts the equilibrium between 70S ribosomes and their 50S and 30S subunits in favor of the free subunits, thus enhancing the availability of 30S subunits on which protein synthesis initiation begins. The polypeptide is Translation initiation factor IF-3 (Xylella fastidiosa (strain Temecula1 / ATCC 700964)).